A 202-amino-acid chain; its full sequence is Recombination protein RecR (202 aa).

A C4-type zinc finger spans residues 57–72; that stretch reads CRDCRTFTEDDICAVC. The 96-residue stretch at 81 to 176 folds into the Toprim domain; the sequence is GQICVVESPA…PATRIAHGVP (96 aa).

It belongs to the RecR family.

May play a role in DNA repair. It seems to be involved in an RecBC-independent recombinational process of DNA repair. It may act with RecF and RecO. The chain is Recombination protein RecR from Photobacterium profundum (strain SS9).